The following is a 508-amino-acid chain: Protoporphyrinogen oxidase 2, chloroplastic/mitochondrial (508 aa).

The N-terminal 22 residues, 1–22, are a transit peptide targeting the chloroplast and mitochondrion; the sequence is MASGAVADHQIEAVSGKRVAVV. Residues 23–28, 46–47, and 68–71 each bind FAD; these read GAGVSG, EA, and GANT. A disordered region spans residues 219 to 239; sequence KGGKSRDTKSSPGTKKGSRGS. FAD-binding positions include valine 268 and 475–477; that span reads LSV.

The protein belongs to the protoporphyrinogen/coproporphyrinogen oxidase family. Protoporphyrinogen oxidase subfamily. Requires FAD as cofactor.

It localises to the plastid. The protein localises to the chloroplast. Its subcellular location is the mitochondrion. The catalysed reaction is protoporphyrinogen IX + 3 O2 = protoporphyrin IX + 3 H2O2. The protein operates within porphyrin-containing compound metabolism; protoporphyrin-IX biosynthesis; protoporphyrin-IX from protoporphyrinogen-IX: step 1/1. It participates in porphyrin-containing compound metabolism; chlorophyll biosynthesis. In terms of biological role, catalyzes the 6-electron oxidation of protoporphyrinogen-IX to form protoporphyrin-IX. The sequence is that of Protoporphyrinogen oxidase 2, chloroplastic/mitochondrial (PPOX2) from Arabidopsis thaliana (Mouse-ear cress).